Reading from the N-terminus, the 284-residue chain is Polyamine aminopropyltransferase (284 aa).

One can recognise a PABS domain in the interval 6-242; the sequence is KGWFTEVCKE…GWWSATLAGH (237 aa). Gln-36 serves as a coordination point for S-methyl-5'-thioadenosine. Residues His-67 and Asp-91 each contribute to the spermidine site. S-methyl-5'-thioadenosine-binding positions include Glu-111 and 142-143; that span reads DG. Asp-161 serves as the catalytic Proton acceptor. Spermidine is bound at residue 161 to 164; the sequence is DSTD.

It belongs to the spermidine/spermine synthase family. Homodimer or homotetramer.

It localises to the cytoplasm. It catalyses the reaction S-adenosyl 3-(methylsulfanyl)propylamine + putrescine = S-methyl-5'-thioadenosine + spermidine + H(+). It functions in the pathway amine and polyamine biosynthesis; spermidine biosynthesis; spermidine from putrescine: step 1/1. In terms of biological role, catalyzes the irreversible transfer of a propylamine group from the amino donor S-adenosylmethioninamine (decarboxy-AdoMet) to putrescine (1,4-diaminobutane) to yield spermidine. This Nitrosococcus oceani (strain ATCC 19707 / BCRC 17464 / JCM 30415 / NCIMB 11848 / C-107) protein is Polyamine aminopropyltransferase.